The following is a 339-amino-acid chain: Putative clathrin assembly protein At1g14686 (339 aa).

An ENTH domain is found at 16 to 148 (SLIAADDILT…ILFHDGNRHR (133 aa)). The disordered stretch occupies residues 283–307 (ESSEESAERTEIAEEEEEEEEEIET). Acidic residues predominate over residues 295-305 (AEEEEEEEEEI).

The protein localises to the membrane. It is found in the clathrin-coated pit. The protein resides in the golgi apparatus. Its subcellular location is the cytoplasmic vesicle. It localises to the clathrin-coated vesicle. In Arabidopsis thaliana (Mouse-ear cress), this protein is Putative clathrin assembly protein At1g14686.